A 270-amino-acid polypeptide reads, in one-letter code: Flavodoxin/ferredoxin--NADP reductase (270 aa).

The region spanning 12 to 113 (VLPDAQTVTS…PKPVGTLVID (102 aa)) is the FAD-binding FR-type domain. Residues 62 to 65 (RAYS), 78 to 80 (YSI), and 86 to 88 (PLT) each bind FAD. T126 contacts NADP(+). Residue T128 participates in FAD binding. NADP(+) contacts are provided by residues R156, 192-193 (TR), R201, and D238. Residue 264–270 (AFVGEGI) coordinates FAD.

The protein belongs to the ferredoxin--NADP reductase type 1 family. Monomer. FAD serves as cofactor.

It localises to the cytoplasm. It catalyses the reaction 2 reduced [2Fe-2S]-[ferredoxin] + NADP(+) + H(+) = 2 oxidized [2Fe-2S]-[ferredoxin] + NADPH. The enzyme catalyses reduced [flavodoxin] + NADP(+) = oxidized [flavodoxin] + NADPH + 2 H(+). Transports electrons between flavodoxin or ferredoxin and NADPH. The polypeptide is Flavodoxin/ferredoxin--NADP reductase (Rhodobacter capsulatus (Rhodopseudomonas capsulata)).